Reading from the N-terminus, the 335-residue chain is UPF0284 protein TON_0688 (335 aa).

Belongs to the UPF0284 family.

This is UPF0284 protein TON_0688 from Thermococcus onnurineus (strain NA1).